A 136-amino-acid chain; its full sequence is Protein NrdI (136 aa).

This sequence belongs to the NrdI family.

Functionally, probably involved in ribonucleotide reductase function. The polypeptide is Protein NrdI (Salmonella agona (strain SL483)).